We begin with the raw amino-acid sequence, 231 residues long: Large ribosomal subunit protein uL1 (231 aa).

It belongs to the universal ribosomal protein uL1 family. As to quaternary structure, part of the 50S ribosomal subunit.

In terms of biological role, binds directly to 23S rRNA. The L1 stalk is quite mobile in the ribosome, and is involved in E site tRNA release. Functionally, protein L1 is also a translational repressor protein, it controls the translation of the L11 operon by binding to its mRNA. The sequence is that of Large ribosomal subunit protein uL1 from Janthinobacterium sp. (strain Marseille) (Minibacterium massiliensis).